A 133-amino-acid chain; its full sequence is Probable mitochondrial pyruvate carrier 2 (133 aa).

3 helical membrane-spanning segments follow: residues 40 to 57 (VFFW…AGLA), 73 to 91 (ALFA…ITPI), and 100 to 116 (FFVM…IAHY).

This sequence belongs to the mitochondrial pyruvate carrier (MPC) (TC 2.A.105) family.

The protein resides in the mitochondrion inner membrane. May mediate the uptake of pyruvate into mitochondria. The protein is Probable mitochondrial pyruvate carrier 2 of Caenorhabditis elegans.